A 158-amino-acid chain; its full sequence is NKG2-F type II integral membrane protein (158 aa).

Residues 1 to 12 (MNKQRGTYSEVS) show a composition bias toward polar residues. The tract at residues 1 to 25 (MNKQRGTYSEVSLAQDPKRQQRKLK) is disordered. Residues 1-74 (MNKQRGTYSE…LPPPEKLTAE (74 aa)) are Cytoplasmic-facing. A helical; Signal-anchor for type II membrane protein transmembrane segment spans residues 75-95 (VLGIICIVLMATVLKTIVLIP). The Extracellular segment spans residues 96–158 (CIGVLEQNNF…VLRRTLICFL (63 aa)).

Can form disulfide-bonded heterodimer with CD94. Natural killer cells.

The protein localises to the membrane. In terms of biological role, may play a role as a receptor for the recognition of MHC class I HLA-E molecules by NK cells. This is NKG2-F type II integral membrane protein (KLRC4) from Homo sapiens (Human).